An 881-amino-acid chain; its full sequence is Serine/threonine-protein kinase/endoribonuclease IRE1b (881 aa).

An N-terminal signal peptide occupies residues 1–21 (MRGSALLDLILFLLVSPLAHS). The Lumenal portion of the chain corresponds to 22–357 (FKGSEISKFY…KQAGFASKFS (336 aa)). N-linked (GlcNAc...) asparagine glycosylation is present at N115. The helical transmembrane segment at 358 to 378 (GLIVLIFGFCVTMLSVCGLFF) threads the bilayer. Residues 379 to 881 (YRLRQSIRIK…FFKYSKTTVF (503 aa)) lie on the Cytoplasmic side of the membrane. The Protein kinase domain occupies 459–744 (FVSNKEIAKG…AQDVMHHPLF (286 aa)). ATP-binding positions include 465-473 (IAKGSNGTV) and K487. The ATP selon article stretch occupies residues 481 to 502 (GRLVAVKRLVQSHHDVAQKEIL). The Proton acceptor role is filled by D608. The tract at residues 642–661 (LTRNSTGLGSGSSGWQAPEQ) is disordered. Positions 747–878 (SDMRLSFLRD…EEFFFKYSKT (132 aa)) constitute a KEN domain.

It belongs to the protein kinase superfamily. Ser/Thr protein kinase family. Homodimer; disulfide-linked. Dimer formation is driven by hydrophobic interactions within the N-terminal luminal domains and stabilized by disulfide bridges. It depends on Mg(2+) as a cofactor. In terms of processing, autophosphorylated. Ubiquitous. Detected in the apical meristem, at leaf margins where vascular bundles end, in the anthers before pollen is formed and in the ovules at a very early stage of development. There is no expression in more mature embryos. Also strongly expressed in the cotyledons immediately after germination but not later on.

The protein localises to the endoplasmic reticulum membrane. The enzyme catalyses L-seryl-[protein] + ATP = O-phospho-L-seryl-[protein] + ADP + H(+). It catalyses the reaction L-threonyl-[protein] + ATP = O-phospho-L-threonyl-[protein] + ADP + H(+). With respect to regulation, the kinase domain is activated by trans-autophosphorylation. Kinase activity is required for activation of the endoribonuclease domain. In terms of biological role, senses unfolded proteins in the lumen of the endoplasmic reticulum via its N-terminal domain which leads to enzyme auto-activation. The active endoribonuclease domain splices bZIP60 mRNA to generate a new C-terminus, converting it into a potent unfolded-protein response transcriptional activator which then induces transcription of UPR target genes. Involved in organ growth regulation. Plays a role in plant immunity and abiotic stress responses. Required for ER stress-induced autophagy. The chain is Serine/threonine-protein kinase/endoribonuclease IRE1b (IRE1B) from Arabidopsis thaliana (Mouse-ear cress).